We begin with the raw amino-acid sequence, 319 residues long: Extracellular phospholipase A1 (319 aa).

The first 24 residues, 1–24 (MSMPLSFTSAVSPVAAIPTPRAAA), serve as a signal peptide directing secretion.

It carries out the reaction a 1,2-diacyl-sn-glycero-3-phosphocholine + H2O = a 2-acyl-sn-glycero-3-phosphocholine + a fatty acid + H(+). This chain is Extracellular phospholipase A1 (phlA), found in Serratia liquefaciens.